A 454-amino-acid chain; its full sequence is C4-dicarboxylate transport protein (454 aa).

Helical transmembrane passes span 33–53 (VQVLAAIAAGILLGHFYPDIG), 66–86 (LVKMIIAPVIFLTVATGIAGM), 101–121 (IYFLAFSTLALLVGLVVANLV), 148–168 (EQSITGFLMNIIPTTLVGAFA), 170–190 (GDILQVLFISVLFGISLAIVG), 210–230 (LVAILMKAAPIGAFGAMAFTI), 243–263 (MLIGTFYLTSFLFVFVVLGAV), 354–374 (LLLVAMLSSKGAAGITGAGFI), and 377–397 (AATLSVVPSVPVAGMALILGI).

The protein belongs to the dicarboxylate/amino acid:cation symporter (DAACS) (TC 2.A.23) family.

Its subcellular location is the cell inner membrane. Responsible for the transport of dicarboxylates such as succinate, fumarate, and malate from the periplasm across the membrane. The chain is C4-dicarboxylate transport protein from Sinorhizobium medicae (strain WSM419) (Ensifer medicae).